The sequence spans 188 residues: Probable chemoreceptor glutamine deamidase CheD (188 aa).

This sequence belongs to the CheD family.

It catalyses the reaction L-glutaminyl-[protein] + H2O = L-glutamyl-[protein] + NH4(+). Its function is as follows. Probably deamidates glutamine residues to glutamate on methyl-accepting chemotaxis receptors (MCPs), playing an important role in chemotaxis. In Caulobacter sp. (strain K31), this protein is Probable chemoreceptor glutamine deamidase CheD.